The following is a 151-amino-acid chain: UPF0178 protein VSAL_I0701 (151 aa).

It belongs to the UPF0178 family.

This is UPF0178 protein VSAL_I0701 from Aliivibrio salmonicida (strain LFI1238) (Vibrio salmonicida (strain LFI1238)).